The sequence spans 580 residues: MTMINPLSYPVPSQYSYTYNNNNNNSNNSSNNNSNNNSNNNNNNNNNCGVPNVSYGSNLNQQSMAQDLRVPEQYSISSPSPKKRPFNSTMTTSPPTPTLLSNSPYIHGSHIVPQYSPQLQNVYNTPHQSSHSIHQPPQQTPNIFNNNNNNNNNNEKSNNQNFGNTLFNSITNNSSNSSNSLIQQNNLTNNGSSSSSSSSSSTNFNQNNNFINSSNDSIYNSNICSFYGNTSSSSSSSLNGIESPPSVELMDDDIEDQLREYISPVIWGMMDNYAREQFYNAIVEFINEEISFRSLLLELRVIAVMDVNYKSIFQFLVDLFLSIEPNQKMVNYLRDNGVEENEFNIDLKSLELSSDNDSNQKKKRERIRKSVSRGLRNPPNKWAKEESQKLIQLVHEHGDKQWKKIAHQIGGGKTGAQCAQHWKRVLCPAIRKGSWDEDEESKLFNLVEKHGQSWKNVASEIRTRTDIQCRYQYFKSCMSREVQWSSREDEILQKKVSENNQQDGTININNTRDISWMDVSKAMARGRQTKIPRTALECKTRYFQLNFGGAPIQIVVPHNDDHLNNPHSPLNSLLQDQNCY.

4 disordered regions span residues 1–58 (MTMI…YGSN), 73–101 (QYSISSPSPKKRPFNSTMTTSPPTPTLLS), 121–203 (NVYN…SSTN), and 354–380 (SDNDSNQKKKRERIRKSVSRGLRNPPN). Composition is skewed to low complexity over residues 20–47 (NNNNNNSNNSSNNNSNNNSNNNNNNNNN), 87–101 (NSTMTTSPPTPTLLS), and 126–203 (PHQS…SSTN). Over residues 361 to 371 (KKKRERIRKSV) the composition is skewed to basic residues. HTH myb-type domains are found at residues 368–430 (RKSV…CPAI) and 431–482 (RKGS…SREV). 2 consecutive DNA-binding regions (H-T-H motif) follow at residues 402 to 426 (WKKIAHQIGGGKTGAQCAQHWKRVL) and 454 to 478 (WKNVASEIRTRTDIQCRYQYFKSCM). The Myb-like domain maps to 484-546 (WSSREDEILQ…ECKTRYFQLN (63 aa)).

Its subcellular location is the nucleus. In terms of biological role, transcription activator required for the culmination, at the time of the fruiting body formation. Regulates genes involved in the cell differentiation within the fruiting body. This Dictyostelium discoideum (Social amoeba) protein is Myb-like protein C (mybC).